Here is a 138-residue protein sequence, read N- to C-terminus: Proofreading thioesterase EntH (138 aa).

The active-site Nucleophile or proton acceptor is E64.

The protein belongs to the thioesterase PaaI family. As to quaternary structure, homotetramer. Dimer of dimers. Interacts specifically with the aryl carrier protein (ArCP) domain of EntB.

It is found in the cytoplasm. The protein operates within siderophore biosynthesis; enterobactin biosynthesis. Functionally, required for optimal enterobactin synthesis. Acts as a proofreading enzyme that prevents EntB misacylation by hydrolyzing the thioester bound existing between EntB and wrongly charged molecules. The protein is Proofreading thioesterase EntH of Citrobacter rodentium (strain ICC168) (Citrobacter freundii biotype 4280).